Consider the following 210-residue polypeptide: Thymidylate kinase (210 aa).

Position 11–18 (11–18 (GGEGAGKT)) interacts with ATP.

Belongs to the thymidylate kinase family.

It carries out the reaction dTMP + ATP = dTDP + ADP. Its function is as follows. Phosphorylation of dTMP to form dTDP in both de novo and salvage pathways of dTTP synthesis. This chain is Thymidylate kinase (tmk), found in Halalkalibacterium halodurans (strain ATCC BAA-125 / DSM 18197 / FERM 7344 / JCM 9153 / C-125) (Bacillus halodurans).